Consider the following 229-residue polypeptide: MSDFNKDDYLNDLPDADELANGQASPDADGADAPSDTGEQLKDDMLKDAAAEQSAGEQASEESAKAAAEATADAASDGDAEGSSLTPLGQAKKEAAEYLEALQRERAEFINYRNRTKKDMDRARQQGIIDVLTAMLPGLDDIDRIREHGEMDDSFKAVAAKIDKTFEKFGVEKFGLKGEDFDPTKHEAILHKPDPEASKATVDTVVEAGYRIGDRVIRAARVVVASPQN.

A disordered region spans residues 1 to 89; the sequence is MSDFNKDDYL…AEGSSLTPLG (89 aa). Over residues 24-36 the composition is skewed to low complexity; the sequence is ASPDADGADAPSD. The segment covering 39–50 has biased composition (basic and acidic residues); that stretch reads EQLKDDMLKDAA. Over residues 65–84 the composition is skewed to low complexity; sequence KAAAEATADAASDGDAEGSS.

It belongs to the GrpE family. Homodimer.

The protein localises to the cytoplasm. In terms of biological role, participates actively in the response to hyperosmotic and heat shock by preventing the aggregation of stress-denatured proteins, in association with DnaK and GrpE. It is the nucleotide exchange factor for DnaK and may function as a thermosensor. Unfolded proteins bind initially to DnaJ; upon interaction with the DnaJ-bound protein, DnaK hydrolyzes its bound ATP, resulting in the formation of a stable complex. GrpE releases ADP from DnaK; ATP binding to DnaK triggers the release of the substrate protein, thus completing the reaction cycle. Several rounds of ATP-dependent interactions between DnaJ, DnaK and GrpE are required for fully efficient folding. The polypeptide is Protein GrpE (Bifidobacterium animalis subsp. lactis (strain AD011)).